The chain runs to 111 residues: Carboxysome shell protein CcmK1 (111 aa).

The BMC domain occupies 4–90; it reads AVGMIETLGF…PHENLEYVLP (87 aa).

The protein belongs to the bacterial microcompartments protein family. CcmK subfamily. Homohexamer. Interacts with full-length CcmM. Forms mixed heterohexamers of all possible stoichiometries with CcmK2, which might form dodecamers. Only very weak interactions with CcmK3 and CcmK4 were seen. Interacts with CcmN and CcmO in the carboxysome.

It localises to the carboxysome. Functionally, one of the shell proteins of the carboxysome, a polyhedral inclusion where RuBisCO (ribulose bisphosphate carboxylase, rbcL-rbcS) is sequestered. Assembles into hexamers which make sheets that form the facets of the polyhedral carboxysome. The hexamer central pore probably regulates metabolite flux. In terms of biological role, probably the major shell protein of the carboxysome, a polyhedral inclusion where RuBisCO (ribulose bisphosphate carboxylase, rbcL-rbcS) is sequestered. The central pore probably regulates metabolite flux. Hexamers make sheets that form the facets of the carboxysome. In Synechocystis sp. (strain ATCC 27184 / PCC 6803 / Kazusa), this protein is Carboxysome shell protein CcmK1.